Reading from the N-terminus, the 136-residue chain is Translation initiation factor 5A (136 aa).

Lysine 37 carries the hypusine modification.

This sequence belongs to the eIF-5A family.

It is found in the cytoplasm. In terms of biological role, functions by promoting the formation of the first peptide bond. The sequence is that of Translation initiation factor 5A (eIF5A) from Thermococcus gammatolerans (strain DSM 15229 / JCM 11827 / EJ3).